Here is a 128-residue protein sequence, read N- to C-terminus: Sulfurtransferase TusD (128 aa).

Cys-78 functions as the Cysteine persulfide intermediate in the catalytic mechanism.

This sequence belongs to the DsrE/TusD family. In terms of assembly, heterohexamer, formed by a dimer of trimers. The hexameric TusBCD complex contains 2 copies each of TusB, TusC and TusD. The TusBCD complex interacts with TusE.

The protein resides in the cytoplasm. Its function is as follows. Part of a sulfur-relay system required for 2-thiolation of 5-methylaminomethyl-2-thiouridine (mnm(5)s(2)U) at tRNA wobble positions. Accepts sulfur from TusA and transfers it in turn to TusE. The sequence is that of Sulfurtransferase TusD from Escherichia coli O7:K1 (strain IAI39 / ExPEC).